Consider the following 281-residue polypeptide: Large ribosomal subunit protein uL2 (281 aa).

The tract at residues 213–281 (RNRHKGIRPT…LIIRRRKESK (69 aa)) is disordered.

It belongs to the universal ribosomal protein uL2 family. In terms of assembly, part of the 50S ribosomal subunit. Forms a bridge to the 30S subunit in the 70S ribosome.

Its function is as follows. One of the primary rRNA binding proteins. Required for association of the 30S and 50S subunits to form the 70S ribosome, for tRNA binding and peptide bond formation. It has been suggested to have peptidyltransferase activity; this is somewhat controversial. Makes several contacts with the 16S rRNA in the 70S ribosome. The sequence is that of Large ribosomal subunit protein uL2 from Mycoplasmopsis pulmonis (strain UAB CTIP) (Mycoplasma pulmonis).